Consider the following 334-residue polypeptide: Dolichyl-phosphate beta-glucosyltransferase (334 aa).

Over 1–12 (MRALRFLIENRN) the chain is Lumenal. A helical membrane pass occupies residues 13-33 (TVFFTLLVALVLSLYLLVYLF). Topologically, residues 34-334 (SHTPRPPYPE…LGIYRDNKKC (301 aa)) are cytoplasmic.

Belongs to the glycosyltransferase 2 family.

It localises to the endoplasmic reticulum membrane. It catalyses the reaction a di-trans,poly-cis-dolichyl phosphate + UDP-alpha-D-glucose = a di-trans,poly-cis-dolichyl beta-D-glucosyl phosphate + UDP. Its pathway is protein modification; protein glycosylation. Functionally, endoplasmic reticulum membrane-bound UDP-glucose:dolichyl-phosphate glucosyltransferase involved in protein N-linked glycosylation. This chain is Dolichyl-phosphate beta-glucosyltransferase, found in Saccharomyces cerevisiae (strain ATCC 204508 / S288c) (Baker's yeast).